A 334-amino-acid chain; its full sequence is UPF0104 membrane protein MTH_378 (334 aa).

A run of 8 helical transmembrane segments spans residues 7–27 (FYFF…MGPS), 33–53 (VYMA…GVLA), 120–140 (FFDL…VPVI), 142–162 (VIAL…YLVN), 218–238 (VIFI…YLVF), 247–267 (FSAV…SALP), 277–297 (MAGL…IALV), and 300–320 (IISF…YAGE).

The protein belongs to the UPF0104 family.

The protein localises to the cell membrane. This chain is UPF0104 membrane protein MTH_378, found in Methanothermobacter thermautotrophicus (strain ATCC 29096 / DSM 1053 / JCM 10044 / NBRC 100330 / Delta H) (Methanobacterium thermoautotrophicum).